The following is a 239-amino-acid chain: Endolytic peptidoglycan transglycosylase RlpA (239 aa).

Residues 1-25 (MTLTRKTLFLLTAAFGIHSFQTASA) form the signal peptide. Residues 160-239 (VAENKDIFID…GMVRAVLTAG (80 aa)) enclose the SPOR domain.

It belongs to the RlpA family.

In terms of biological role, lytic transglycosylase with a strong preference for naked glycan strands that lack stem peptides. The chain is Endolytic peptidoglycan transglycosylase RlpA from Neisseria meningitidis serogroup A / serotype 4A (strain DSM 15465 / Z2491).